Here is a 339-residue protein sequence, read N- to C-terminus: UDP-N-acetylenolpyruvoylglucosamine reductase (339 aa).

An FAD-binding PCMH-type domain is found at 19 to 189 (VDVQARLFAE…LRVRFKLSRV (171 aa)). The active site involves R166. The active-site Proton donor is S239. The active site involves E335.

It belongs to the MurB family. FAD serves as cofactor.

It is found in the cytoplasm. The enzyme catalyses UDP-N-acetyl-alpha-D-muramate + NADP(+) = UDP-N-acetyl-3-O-(1-carboxyvinyl)-alpha-D-glucosamine + NADPH + H(+). Its pathway is cell wall biogenesis; peptidoglycan biosynthesis. Its function is as follows. Cell wall formation. This chain is UDP-N-acetylenolpyruvoylglucosamine reductase, found in Pseudomonas syringae pv. syringae (strain B728a).